We begin with the raw amino-acid sequence, 492 residues long: 2-succinylbenzoate--CoA ligase (492 aa).

Belongs to the ATP-dependent AMP-binding enzyme family. MenE subfamily.

It catalyses the reaction 2-succinylbenzoate + ATP + CoA = 2-succinylbenzoyl-CoA + AMP + diphosphate. Its pathway is quinol/quinone metabolism; 1,4-dihydroxy-2-naphthoate biosynthesis; 1,4-dihydroxy-2-naphthoate from chorismate: step 5/7. It participates in quinol/quinone metabolism; menaquinone biosynthesis. Its function is as follows. Converts 2-succinylbenzoate (OSB) to 2-succinylbenzoyl-CoA (OSB-CoA). This chain is 2-succinylbenzoate--CoA ligase, found in Staphylococcus aureus (strain MSSA476).